We begin with the raw amino-acid sequence, 239 residues long: RBPJ-interacting and tubulin-associated protein 1 (239 aa).

The Nuclear export signal motif lies at Leu12–Pro24. Disordered stretches follow at residues Ala62 to Lys97 and Leu149 to Lys239. The short motif at Gly93–Ser109 is the Nuclear localization signal element. Residues Trp129–Ala158 form an interaction with RBPJ/RBPSUH region. 2 stretches are compositionally biased toward polar residues: residues Leu149 to Lys159 and Arg203 to Gly221. Residues Ala158 to Lys239 form an interaction with tubulin region.

It belongs to the RITA family. As to quaternary structure, interacts with rbpj/rbpsuh.

It is found in the cytoplasm. The protein localises to the nucleus. In terms of biological role, tubulin-binding protein that acts as a negative regulator of Notch signaling pathway. Shuttles between the cytoplasm and the nucleus and mediates the nuclear export of rbpj/rbpsuh, thereby preventing the interaction between rbpj/rbpsuh and NICD product of Notch proteins (Notch intracellular domain), leading to down-regulate Notch-mediated transcription. May play a role in neurogenesis. This is RBPJ-interacting and tubulin-associated protein 1 (rita1) from Xenopus laevis (African clawed frog).